Reading from the N-terminus, the 308-residue chain is Homoserine kinase (308 aa).

ATP is bound at residue 85–95; that stretch reads PLTRGLGSSAA.

This sequence belongs to the GHMP kinase family. Homoserine kinase subfamily.

It is found in the cytoplasm. It catalyses the reaction L-homoserine + ATP = O-phospho-L-homoserine + ADP + H(+). Its pathway is amino-acid biosynthesis; L-threonine biosynthesis; L-threonine from L-aspartate: step 4/5. Its function is as follows. Catalyzes the ATP-dependent phosphorylation of L-homoserine to L-homoserine phosphate. This is Homoserine kinase from Caldicellulosiruptor saccharolyticus (strain ATCC 43494 / DSM 8903 / Tp8T 6331).